Here is a 62-residue protein sequence, read N- to C-terminus: uncharacterized protein (62 aa).

The protein localises to the plastid. It localises to the chloroplast. This is an uncharacterized protein from Chlamydomonas reinhardtii (Chlamydomonas smithii).